A 144-amino-acid chain; its full sequence is Bacilliredoxin BCE_4227 (144 aa).

It belongs to the bacilliredoxin family.

This chain is Bacilliredoxin BCE_4227, found in Bacillus cereus (strain ATCC 10987 / NRS 248).